The sequence spans 119 residues: Small ribosomal subunit protein uS13m (119 aa).

Belongs to the universal ribosomal protein uS13 family. Component of the mitochondrial small ribosomal subunit (mt-SSU). Mature N.crassa 74S mitochondrial ribosomes consist of a small (37S) and a large (54S) subunit. The 37S small subunit contains a 16S ribosomal RNA (16S mt-rRNA) and 32 different proteins. The 54S large subunit contains a 23S rRNA (23S mt-rRNA) and 42 different proteins.

It localises to the mitochondrion. Its function is as follows. Component of the mitochondrial ribosome (mitoribosome), a dedicated translation machinery responsible for the synthesis of mitochondrial genome-encoded proteins, including at least some of the essential transmembrane subunits of the mitochondrial respiratory chain. The mitoribosomes are attached to the mitochondrial inner membrane and translation products are cotranslationally integrated into the membrane. The protein is Small ribosomal subunit protein uS13m (sws2) of Neurospora crassa (strain ATCC 24698 / 74-OR23-1A / CBS 708.71 / DSM 1257 / FGSC 987).